The primary structure comprises 475 residues: Ribulose bisphosphate carboxylase large chain (475 aa).

The propeptide occupies 1 to 2 (MS). An N-acetylproline modification is found at Pro-3. Lys-14 is subject to N6,N6,N6-trimethyllysine. Substrate is bound by residues Asn-123 and Thr-173. The active-site Proton acceptor is the Lys-175. Lys-177 provides a ligand contact to substrate. The Mg(2+) site is built by Lys-201, Asp-203, and Glu-204. An N6-carboxylysine modification is found at Lys-201. Residue His-294 is the Proton acceptor of the active site. Substrate contacts are provided by Arg-295, His-327, and Ser-379.

The protein belongs to the RuBisCO large chain family. Type I subfamily. In terms of assembly, heterohexadecamer of 8 large chains and 8 small chains; disulfide-linked. The disulfide link is formed within the large subunit homodimers. Requires Mg(2+) as cofactor. Post-translationally, the disulfide bond which can form in the large chain dimeric partners within the hexadecamer appears to be associated with oxidative stress and protein turnover.

It is found in the plastid. It localises to the chloroplast. It carries out the reaction 2 (2R)-3-phosphoglycerate + 2 H(+) = D-ribulose 1,5-bisphosphate + CO2 + H2O. It catalyses the reaction D-ribulose 1,5-bisphosphate + O2 = 2-phosphoglycolate + (2R)-3-phosphoglycerate + 2 H(+). In terms of biological role, ruBisCO catalyzes two reactions: the carboxylation of D-ribulose 1,5-bisphosphate, the primary event in carbon dioxide fixation, as well as the oxidative fragmentation of the pentose substrate in the photorespiration process. Both reactions occur simultaneously and in competition at the same active site. The polypeptide is Ribulose bisphosphate carboxylase large chain (Oenothera argillicola (Appalachian evening primrose)).